Here is a 110-residue protein sequence, read N- to C-terminus: uncharacterized protein (110 aa).

A helical transmembrane segment spans residues 18–34 (MFPLISTFTSIGLGVLM).

The protein resides in the membrane. This is an uncharacterized protein from Saccharomyces cerevisiae (strain ATCC 204508 / S288c) (Baker's yeast).